A 964-amino-acid chain; its full sequence is Syndetin (964 aa).

Position 1 is an N-acetylmethionine (Met-1). The disordered stretch occupies residues 1 to 25 (MQKIKSLMTRQGLKSPPESLNDLGA). Ser-15 is subject to Phosphoserine. Coiled-coil stretches lie at residues 81–107 (LNLQ…VADL) and 216–244 (YSCI…LSKI). A phosphoserine mark is found at Ser-494, Ser-498, Ser-559, and Ser-561. The segment at 532 to 563 (DEETEDVLASNGYESDEQEKSAYQDYDSDSDV) is disordered. Lys-963 participates in a covalent cross-link: Glycyl lysine isopeptide (Lys-Gly) (interchain with G-Cter in SUMO1); alternate. Lys-963 participates in a covalent cross-link: Glycyl lysine isopeptide (Lys-Gly) (interchain with G-Cter in SUMO2); alternate.

It belongs to the syndetin family. Component of the endosome-associated retrograde protein (EARP) complex, composed of VPS51, VPS52, VPS53 and VPS50/Syndetin. The EARP complex interacts with EIPR1. Interacts with VPS51 and VPS53 in an EIPR1-independent manner.

It localises to the recycling endosome. The protein resides in the membrane. Its function is as follows. Acts as a component of the EARP complex that is involved in endocytic recycling. The EARP complex associates with Rab4-positive endosomes and promotes recycling of internalized transferrin receptor (TFRC) to the plasma membrane. Within the EARP complex, required to tether the complex to recycling endosomes. Not involved in retrograde transport from early and late endosomes to the trans-Golgi network (TGN). The protein is Syndetin of Mus musculus (Mouse).